The primary structure comprises 419 residues: Gamma-glutamyl phosphate reductase (419 aa).

Belongs to the gamma-glutamyl phosphate reductase family.

Its subcellular location is the cytoplasm. The catalysed reaction is L-glutamate 5-semialdehyde + phosphate + NADP(+) = L-glutamyl 5-phosphate + NADPH + H(+). It functions in the pathway amino-acid biosynthesis; L-proline biosynthesis; L-glutamate 5-semialdehyde from L-glutamate: step 2/2. Catalyzes the NADPH-dependent reduction of L-glutamate 5-phosphate into L-glutamate 5-semialdehyde and phosphate. The product spontaneously undergoes cyclization to form 1-pyrroline-5-carboxylate. This Solidesulfovibrio magneticus (strain ATCC 700980 / DSM 13731 / RS-1) (Desulfovibrio magneticus) protein is Gamma-glutamyl phosphate reductase.